A 112-amino-acid chain; its full sequence is MKKIEAIIKPFKLDDVRESLSDVGITGMTVTEVRGFGRQKGHTELYRGAEYMVDFLPKVKMEIVVTDEQVDQCIEAIMETAQTGKIGDGKIFVYDVERVIRIRTGEENEDAI.

Tyr-51 is subject to O-UMP-tyrosine.

Belongs to the P(II) protein family. Homotrimer. Post-translationally, uridylylated/deuridylylated by GlnD.

Its function is as follows. P-II indirectly controls the transcription of the glutamine synthetase gene (GlnA). P-II prevents NR-II-catalyzed conversion of NR-I to NR-I-phosphate, the transcriptional activator of GlnA. When P-II is uridylylated to P-II-UMP, these events are reversed. When the ratio of Gln to 2-ketoglutarate decreases, P-II is uridylylated to P-II-UMP, which causes the deadenylation of glutamine synthetase by GlnE, so activating the enzyme. This chain is Nitrogen regulatory protein P-II (glnB), found in Pasteurella multocida (strain Pm70).